We begin with the raw amino-acid sequence, 395 residues long: Ribosomal RNA large subunit methyltransferase I (395 aa).

One can recognise a PUA domain in the interval 2–79; sequence SSRVTLHPGR…QNESVDNGFF (78 aa).

The protein belongs to the methyltransferase superfamily. RlmI family.

The protein localises to the cytoplasm. The enzyme catalyses cytidine(1962) in 23S rRNA + S-adenosyl-L-methionine = 5-methylcytidine(1962) in 23S rRNA + S-adenosyl-L-homocysteine + H(+). Its function is as follows. Specifically methylates the cytosine at position 1962 (m5C1962) of 23S rRNA. This Pseudoalteromonas atlantica (strain T6c / ATCC BAA-1087) protein is Ribosomal RNA large subunit methyltransferase I.